A 241-amino-acid chain; its full sequence is Queuine tRNA-ribosyltransferase-like protein (241 aa).

The protein belongs to the queuine tRNA-ribosyltransferase family.

The polypeptide is Queuine tRNA-ribosyltransferase-like protein (Plasmodium falciparum).